A 203-amino-acid chain; its full sequence is Guanylate kinase (203 aa).

The Guanylate kinase-like domain occupies 3–181 (GTLYIVSAPS…ALDDLKAIFR (179 aa)). 10–17 (APSGAGKT) contacts ATP.

The protein belongs to the guanylate kinase family.

Its subcellular location is the cytoplasm. It catalyses the reaction GMP + ATP = GDP + ADP. In terms of biological role, essential for recycling GMP and indirectly, cGMP. The polypeptide is Guanylate kinase (gmk) (Pseudomonas aeruginosa (strain ATCC 15692 / DSM 22644 / CIP 104116 / JCM 14847 / LMG 12228 / 1C / PRS 101 / PAO1)).